We begin with the raw amino-acid sequence, 496 residues long: Glycerol kinase (496 aa).

Residue threonine 11 coordinates ADP. The ATP site is built by threonine 11, threonine 12, and serine 13. Threonine 11 provides a ligand contact to sn-glycerol 3-phosphate. Arginine 15 is an ADP binding site. Residues arginine 81, glutamate 82, tyrosine 133, and aspartate 242 each coordinate sn-glycerol 3-phosphate. 5 residues coordinate glycerol: arginine 81, glutamate 82, tyrosine 133, aspartate 242, and glutamine 243. The ADP site is built by threonine 264 and glycine 307. Residues threonine 264, glycine 307, and glutamine 311 each contribute to the ATP site. ADP is bound at residue asparagine 413.

This sequence belongs to the FGGY kinase family.

The catalysed reaction is glycerol + ATP = sn-glycerol 3-phosphate + ADP + H(+). Its pathway is polyol metabolism; glycerol degradation via glycerol kinase pathway; sn-glycerol 3-phosphate from glycerol: step 1/1. Inhibited by fructose 1,6-bisphosphate (FBP). Key enzyme in the regulation of glycerol uptake and metabolism. Catalyzes the phosphorylation of glycerol to yield sn-glycerol 3-phosphate. In Borrelia duttonii (strain Ly), this protein is Glycerol kinase.